The sequence spans 410 residues: Phosphoserine phosphatase (410 aa).

An ACT domain is found at 13–91 (LVKIFGKDRP…QAEIISGIGD (79 aa)). D187 functions as the Nucleophile in the catalytic mechanism. Mg(2+) contacts are provided by D187 and D189. The active-site Proton donor is the D189. Substrate is bound by residues E196, R232, 275 to 276 (SG), and K320. A Mg(2+)-binding site is contributed by D343. Residue N346 coordinates substrate.

This sequence belongs to the HAD-like hydrolase superfamily. SerB family. It depends on Mg(2+) as a cofactor.

The catalysed reaction is O-phospho-L-serine + H2O = L-serine + phosphate. It carries out the reaction O-phospho-D-serine + H2O = D-serine + phosphate. It functions in the pathway amino-acid biosynthesis; L-serine biosynthesis; L-serine from 3-phospho-D-glycerate: step 3/3. In terms of biological role, catalyzes the dephosphorylation of phosphoserine (P-Ser) in vitro. Also catalyzes the dephosphorylation of phosphothreonine (P-Thr) in vitro. This Streptomyces coelicolor (strain ATCC BAA-471 / A3(2) / M145) protein is Phosphoserine phosphatase.